The primary structure comprises 27 residues: Kunitz-type serine protease inhibitor 3 (27 aa).

The 27-residue stretch at 1 to 27 (EVHNFACLGKPDPGGCAHYIYRRYYYV) folds into the BPTI/Kunitz inhibitor domain.

The protein localises to the secreted. Functionally, inhibits bovine trypsin and human neutrophil elastase. The chain is Kunitz-type serine protease inhibitor 3 from Rhipicephalus microplus (Cattle tick).